A 288-amino-acid chain; its full sequence is MKKRLFIISQYLLPHHLLSRLAGCIAECRVRWFKNAFTRWFAKQYQVDMSEAQVEDVTAYEHFNAFFTRALKDGARPLDPTPGAVLSPADGAVSQLGPIEHGRVFQAKGHSYSVLELLGGDPALAQPFMGGDFATIYLSPKDYHRVHMPLAGTLREMVYVPGRIFSVNQTTAENVPELFARNERVVCIFDTERGPMALVLVGAMIVASIETVWAGLVTPPKRELKTVRYDEAARAPIHLEKGAEMGRFKLGSTAIVLFGPDQVQWAQELAAGSPVRMGQGLGLGLPKA.

Active-site charge relay system; for autoendoproteolytic cleavage activity residues include D90, H147, and S252. Residue S252 is the Schiff-base intermediate with substrate; via pyruvic acid; for decarboxylase activity of the active site. Position 252 is a pyruvic acid (Ser); by autocatalysis (S252).

It belongs to the phosphatidylserine decarboxylase family. PSD-B subfamily. Prokaryotic type I sub-subfamily. In terms of assembly, heterodimer of a large membrane-associated beta subunit and a small pyruvoyl-containing alpha subunit. Pyruvate is required as a cofactor. Post-translationally, is synthesized initially as an inactive proenzyme. Formation of the active enzyme involves a self-maturation process in which the active site pyruvoyl group is generated from an internal serine residue via an autocatalytic post-translational modification. Two non-identical subunits are generated from the proenzyme in this reaction, and the pyruvate is formed at the N-terminus of the alpha chain, which is derived from the carboxyl end of the proenzyme. The autoendoproteolytic cleavage occurs by a canonical serine protease mechanism, in which the side chain hydroxyl group of the serine supplies its oxygen atom to form the C-terminus of the beta chain, while the remainder of the serine residue undergoes an oxidative deamination to produce ammonia and the pyruvoyl prosthetic group on the alpha chain. During this reaction, the Ser that is part of the protease active site of the proenzyme becomes the pyruvoyl prosthetic group, which constitutes an essential element of the active site of the mature decarboxylase.

It is found in the cell membrane. The enzyme catalyses a 1,2-diacyl-sn-glycero-3-phospho-L-serine + H(+) = a 1,2-diacyl-sn-glycero-3-phosphoethanolamine + CO2. Its pathway is phospholipid metabolism; phosphatidylethanolamine biosynthesis; phosphatidylethanolamine from CDP-diacylglycerol: step 2/2. In terms of biological role, catalyzes the formation of phosphatidylethanolamine (PtdEtn) from phosphatidylserine (PtdSer). The protein is Phosphatidylserine decarboxylase proenzyme of Pseudomonas fluorescens (strain ATCC BAA-477 / NRRL B-23932 / Pf-5).